The following is a 485-amino-acid chain: Glutamate--tRNA ligase 1 (485 aa).

The 'HIGH' region motif lies at 10–20 (PSPTGAIHIGN). Residues 252–256 (KLSKR) carry the 'KMSKS' region motif. Position 255 (K255) interacts with ATP.

The protein belongs to the class-I aminoacyl-tRNA synthetase family. Glutamate--tRNA ligase type 1 subfamily. As to quaternary structure, monomer.

The protein resides in the cytoplasm. The enzyme catalyses tRNA(Glu) + L-glutamate + ATP = L-glutamyl-tRNA(Glu) + AMP + diphosphate. In terms of biological role, catalyzes the attachment of glutamate to tRNA(Glu) in a two-step reaction: glutamate is first activated by ATP to form Glu-AMP and then transferred to the acceptor end of tRNA(Glu). The polypeptide is Glutamate--tRNA ligase 1 (Thermoanaerobacter sp. (strain X514)).